The chain runs to 231 residues: Orotate phosphoribosyltransferase (231 aa).

5-phospho-alpha-D-ribose 1-diphosphate contacts are provided by residues K27, 79 to 80 (YK), R106, K107, K110, H112, and 133 to 141 (DDVMTAGTA). Orotate is bound by residues T137 and R166.

It belongs to the purine/pyrimidine phosphoribosyltransferase family. PyrE subfamily. Homodimer. The cofactor is Mg(2+).

It carries out the reaction orotidine 5'-phosphate + diphosphate = orotate + 5-phospho-alpha-D-ribose 1-diphosphate. The protein operates within pyrimidine metabolism; UMP biosynthesis via de novo pathway; UMP from orotate: step 1/2. Its function is as follows. Catalyzes the transfer of a ribosyl phosphate group from 5-phosphoribose 1-diphosphate to orotate, leading to the formation of orotidine monophosphate (OMP). The chain is Orotate phosphoribosyltransferase from Bifidobacterium animalis subsp. lactis (strain AD011).